The chain runs to 152 residues: Biogenesis of lysosome-related organelles complex 1 subunit 1 (152 aa).

It belongs to the BLOC1S1 family. Component of the biogenesis of lysosome-related organelles complex-1 (BLOC-1). Interacts with BLOS2 and SNX1. Expressed in the whole plant (at protein level).

Its subcellular location is the cytoplasm. The protein localises to the endosome. Functionally, component of the biogenesis of lysosome-related organelles complex-1 (BLOC-1), a complex that mediates the vacuolar degradative transport via the intracellular vesicle trafficking from the endosome to the vacuole. Probably regulates the PIN1 and PIN2 homeostasis through its interaction with SNX1. The protein is Biogenesis of lysosome-related organelles complex 1 subunit 1 (BLOS1) of Arabidopsis thaliana (Mouse-ear cress).